The primary structure comprises 572 residues: Phosphoenolpyruvate-protein phosphotransferase (572 aa).

Residue His190 is the Tele-phosphohistidine intermediate of the active site. Phosphoenolpyruvate-binding residues include Arg297 and Arg333. 2 residues coordinate Mg(2+): Glu432 and Asp456. Residues 455–456 (ND) and Arg466 contribute to the phosphoenolpyruvate site. The active-site Proton donor is the Cys503.

Belongs to the PEP-utilizing enzyme family. As to quaternary structure, homodimer. Mg(2+) serves as cofactor.

The protein resides in the cytoplasm. It catalyses the reaction L-histidyl-[protein] + phosphoenolpyruvate = N(pros)-phospho-L-histidyl-[protein] + pyruvate. General (non sugar-specific) component of the phosphoenolpyruvate-dependent sugar phosphotransferase system (sugar PTS). This major carbohydrate active-transport system catalyzes the phosphorylation of incoming sugar substrates concomitantly with their translocation across the cell membrane. Enzyme I transfers the phosphoryl group from phosphoenolpyruvate (PEP) to the phosphoryl carrier protein (HPr). The protein is Phosphoenolpyruvate-protein phosphotransferase (ptsI) of Listeria innocua serovar 6a (strain ATCC BAA-680 / CLIP 11262).